A 185-amino-acid polypeptide reads, in one-letter code: Ribosome-recycling factor (185 aa).

This sequence belongs to the RRF family.

Its subcellular location is the cytoplasm. Responsible for the release of ribosomes from messenger RNA at the termination of protein biosynthesis. May increase the efficiency of translation by recycling ribosomes from one round of translation to another. This Sodalis glossinidius (strain morsitans) protein is Ribosome-recycling factor.